The sequence spans 498 residues: Cytochrome P450 71B24 (498 aa).

The helical transmembrane segment at M1–D21 threads the bilayer. C442 contributes to the heme binding site.

It belongs to the cytochrome P450 family. The cofactor is heme.

It localises to the membrane. This Arabidopsis thaliana (Mouse-ear cress) protein is Cytochrome P450 71B24 (CYP71B24).